Here is a 345-residue protein sequence, read N- to C-terminus: Biotin synthase (345 aa).

A Radical SAM core domain is found at 38 to 256 (GEVQVSTLLS…IAVARIMMPR (219 aa)). Positions 53, 57, and 60 each coordinate [4Fe-4S] cluster. [2Fe-2S] cluster is bound by residues cysteine 97, cysteine 128, cysteine 188, and arginine 260.

Belongs to the radical SAM superfamily. Biotin synthase family. As to quaternary structure, homodimer. Requires [4Fe-4S] cluster as cofactor. [2Fe-2S] cluster serves as cofactor.

It catalyses the reaction (4R,5S)-dethiobiotin + (sulfur carrier)-SH + 2 reduced [2Fe-2S]-[ferredoxin] + 2 S-adenosyl-L-methionine = (sulfur carrier)-H + biotin + 2 5'-deoxyadenosine + 2 L-methionine + 2 oxidized [2Fe-2S]-[ferredoxin]. It functions in the pathway cofactor biosynthesis; biotin biosynthesis; biotin from 7,8-diaminononanoate: step 2/2. Functionally, catalyzes the conversion of dethiobiotin (DTB) to biotin by the insertion of a sulfur atom into dethiobiotin via a radical-based mechanism. In Sodalis glossinidius (strain morsitans), this protein is Biotin synthase.